We begin with the raw amino-acid sequence, 1272 residues long: CST complex subunit CTC1 (1272 aa).

Belongs to the CTC1 family. Component of the CST complex, composed of CTC1, TEN1 and STN1. Interacts with POT1A.

Its subcellular location is the nucleus. The protein localises to the chromosome. The protein resides in the telomere. Component of the CST complex, a complex that binds to single-stranded DNA and is required to protect telomeres from DNA degradation. The CST complex binds single-stranded DNA with high affinity in a sequence-independent manner, while isolated subunits bind DNA with low affinity by themselves. Associates with enzymatically active telomerase. The polypeptide is CST complex subunit CTC1 (Arabidopsis thaliana (Mouse-ear cress)).